We begin with the raw amino-acid sequence, 343 residues long: tRNA N6-adenosine threonylcarbamoyltransferase (343 aa).

The Fe cation site is built by His-111 and His-115. Residues 134–138 (LVSGG), Asp-167, Gly-180, and Asn-276 each bind substrate. Fe cation is bound at residue Asp-304.

This sequence belongs to the KAE1 / TsaD family. Fe(2+) is required as a cofactor.

It is found in the cytoplasm. It catalyses the reaction L-threonylcarbamoyladenylate + adenosine(37) in tRNA = N(6)-L-threonylcarbamoyladenosine(37) in tRNA + AMP + H(+). In terms of biological role, required for the formation of a threonylcarbamoyl group on adenosine at position 37 (t(6)A37) in tRNAs that read codons beginning with adenine. Is involved in the transfer of the threonylcarbamoyl moiety of threonylcarbamoyl-AMP (TC-AMP) to the N6 group of A37, together with TsaE and TsaB. TsaD likely plays a direct catalytic role in this reaction. The sequence is that of tRNA N6-adenosine threonylcarbamoyltransferase from Hahella chejuensis (strain KCTC 2396).